The primary structure comprises 711 residues: Dixin (711 aa).

Residue Leu-2 is the site of N-myristoyl glycine attachment. Phosphoserine is present on Val-13. A Calponin-homology (CH) domain is found at 20-153; the sequence is EQQLQAYVAW…LVLALAAHFK (134 aa). The segment at 153–326 is actin-binding; the sequence is KPGSSRTVSQ…LEKEMEEAKK (174 aa). Position 212 is a phosphoserine (Ser-212). Disordered stretches follow at residues 233-258, 271-298, and 584-623; these read GQQKSPSESSCSSLTSPSPIHSAKSE, VIIPSEGIENRTDEPDSPSSRDWRPGSR, and TQKKQERKVGGRSPRNQASSEYRASWPPNSTLPHSQSSPA. The segment covering 237 to 254 has biased composition (low complexity); sequence SPSESSCSSLTSPSPIHS. The residue at position 257 (Ser-257) is a Phosphoserine. Residues 278-295 are compositionally biased toward basic and acidic residues; it reads IENRTDEPDSPSSRDWRP. Residues 279–452 adopt a coiled-coil conformation; that stretch reads ENRTDEPDSP…NRLLGEYKKE (174 aa). The span at 597–623 shows a compositional bias: polar residues; sequence PRNQASSEYRASWPPNSTLPHSQSSPA. Positions 600–680 constitute a DIX domain; it reads QASSEYRASW…HFKALDPEFG (81 aa). Ser-618 is subject to Phosphoserine.

Belongs to the DIXDC1 family. May bind filamentous actin. Directly interacts (via DIX domain) with DVL2 (via DIX domain). Interacts with gamma-tubulin. Interacts with the complex composed of DVL2 and Rac. Interacts with AXIN1; competes with MAP3K1. Interacts with MAP3K4 preventing MAP3K4 interaction with AXIN1. Phosphorylated on tyrosine and serine residues. Post-translationally, polyubiquitinated, leading to its proteasomal degradation. WNT3A signaling increases DIXDC1 protein levels by inhibiting its ubiquitination and subsequent degradation. As to expression, abundantly expressed in brain and testis and to a lower extent in lung, kidney, colon, ovary and urinary bladder. Expressed in brain, liver, testis and spleen (at protein level). Expressed throughout the brain with strong expression in main and accessory olfactory bulbs, cerebral cortex, piriform cortex, hippocampus, habenular nucleus, dorsal thalamus, superior and inferior colliculi and cerebellum.

It localises to the cell junction. The protein resides in the focal adhesion. It is found in the cytoplasm. Its subcellular location is the cytoskeleton. The protein localises to the stress fiber. Positive effector of the Wnt signaling pathway; activates WNT3A signaling via DVL2. Regulates JNK activation by AXIN1 and DVL2. This Mus musculus (Mouse) protein is Dixin (Dixdc1).